The sequence spans 644 residues: Exoribonuclease 2 (644 aa).

Residues 189–516 enclose the RNB domain; it reads RQDLTALNFV…NHRLLKAVIK (328 aa). In terms of domain architecture, S1 motif spans 561-643; the sequence is NTRFAAEIID…ETRSIIARPA (83 aa).

Belongs to the RNR ribonuclease family. RNase II subfamily.

It localises to the cytoplasm. The enzyme catalyses Exonucleolytic cleavage in the 3'- to 5'-direction to yield nucleoside 5'-phosphates.. Functionally, involved in mRNA degradation. Hydrolyzes single-stranded polyribonucleotides processively in the 3' to 5' direction. The polypeptide is Exoribonuclease 2 (Salmonella agona (strain SL483)).